We begin with the raw amino-acid sequence, 285 residues long: 4-diphosphocytidyl-2-C-methyl-D-erythritol kinase (285 aa).

K28 is an active-site residue. 109–119 serves as a coordination point for ATP; the sequence is PVAAGLGGGSA. The active site involves D148.

This sequence belongs to the GHMP kinase family. IspE subfamily.

The catalysed reaction is 4-CDP-2-C-methyl-D-erythritol + ATP = 4-CDP-2-C-methyl-D-erythritol 2-phosphate + ADP + H(+). The protein operates within isoprenoid biosynthesis; isopentenyl diphosphate biosynthesis via DXP pathway; isopentenyl diphosphate from 1-deoxy-D-xylulose 5-phosphate: step 3/6. Catalyzes the phosphorylation of the position 2 hydroxy group of 4-diphosphocytidyl-2C-methyl-D-erythritol. This chain is 4-diphosphocytidyl-2-C-methyl-D-erythritol kinase, found in Novosphingobium aromaticivorans (strain ATCC 700278 / DSM 12444 / CCUG 56034 / CIP 105152 / NBRC 16084 / F199).